Here is a 193-residue protein sequence, read N- to C-terminus: Probable GTP-binding protein EngB (193 aa).

Residues 19–188 (SVKEVCFMGR…HKQIFELFKA (170 aa)) enclose the EngB-type G domain. Residues 27 to 34 (GRSNVGKS), 53 to 57 (GRTQL), 70 to 73 (DLPG), 136 to 139 (NKFD), and 167 to 169 (VSA) contribute to the GTP site. Mg(2+) contacts are provided by Ser-34 and Thr-55.

It belongs to the TRAFAC class TrmE-Era-EngA-EngB-Septin-like GTPase superfamily. EngB GTPase family. Mg(2+) is required as a cofactor.

Its function is as follows. Necessary for normal cell division and for the maintenance of normal septation. This Mycoplasma pneumoniae (strain ATCC 29342 / M129 / Subtype 1) (Mycoplasmoides pneumoniae) protein is Probable GTP-binding protein EngB.